The chain runs to 172 residues: Adenine phosphoribosyltransferase (172 aa).

The protein belongs to the purine/pyrimidine phosphoribosyltransferase family. As to quaternary structure, homodimer.

The protein resides in the cytoplasm. The catalysed reaction is AMP + diphosphate = 5-phospho-alpha-D-ribose 1-diphosphate + adenine. It functions in the pathway purine metabolism; AMP biosynthesis via salvage pathway; AMP from adenine: step 1/1. In terms of biological role, catalyzes a salvage reaction resulting in the formation of AMP, that is energically less costly than de novo synthesis. The polypeptide is Adenine phosphoribosyltransferase (Clostridium beijerinckii (strain ATCC 51743 / NCIMB 8052) (Clostridium acetobutylicum)).